Reading from the N-terminus, the 347-residue chain is Anthranilate phosphoribosyltransferase (347 aa).

5-phospho-alpha-D-ribose 1-diphosphate is bound by residues glycine 88, 91-92 (GD), threonine 96, 98-101 (NIST), 116-124 (KHGNRAASS), and serine 128. Position 88 (glycine 88) interacts with anthranilate. Serine 100 contacts Mg(2+). Residue asparagine 119 coordinates anthranilate. Arginine 174 lines the anthranilate pocket. 2 residues coordinate Mg(2+): aspartate 233 and glutamate 234.

It belongs to the anthranilate phosphoribosyltransferase family. As to quaternary structure, homodimer. Requires Mg(2+) as cofactor.

It carries out the reaction N-(5-phospho-beta-D-ribosyl)anthranilate + diphosphate = 5-phospho-alpha-D-ribose 1-diphosphate + anthranilate. It functions in the pathway amino-acid biosynthesis; L-tryptophan biosynthesis; L-tryptophan from chorismate: step 2/5. In terms of biological role, catalyzes the transfer of the phosphoribosyl group of 5-phosphorylribose-1-pyrophosphate (PRPP) to anthranilate to yield N-(5'-phosphoribosyl)-anthranilate (PRA). This Rhodospirillum rubrum (strain ATCC 11170 / ATH 1.1.1 / DSM 467 / LMG 4362 / NCIMB 8255 / S1) protein is Anthranilate phosphoribosyltransferase.